A 78-amino-acid chain; its full sequence is Small ribosomal subunit protein bS18 (78 aa).

Belongs to the bacterial ribosomal protein bS18 family. Part of the 30S ribosomal subunit. Forms a tight heterodimer with protein bS6.

Functionally, binds as a heterodimer with protein bS6 to the central domain of the 16S rRNA, where it helps stabilize the platform of the 30S subunit. This Kocuria rhizophila (strain ATCC 9341 / DSM 348 / NBRC 103217 / DC2201) protein is Small ribosomal subunit protein bS18.